Reading from the N-terminus, the 237-residue chain is Purine nucleoside phosphorylase DeoD-type (237 aa).

Residue His4 participates in a purine D-ribonucleoside binding. Residues Gly20, Arg24, Arg43, and 87–90 (RVGT) each bind phosphate. Residues 179–181 (EME) and 203–204 (SD) contribute to the a purine D-ribonucleoside site. Residue Asp204 is the Proton donor of the active site.

This sequence belongs to the PNP/UDP phosphorylase family. As to quaternary structure, homohexamer; trimer of homodimers.

The enzyme catalyses a purine D-ribonucleoside + phosphate = a purine nucleobase + alpha-D-ribose 1-phosphate. The catalysed reaction is a purine 2'-deoxy-D-ribonucleoside + phosphate = a purine nucleobase + 2-deoxy-alpha-D-ribose 1-phosphate. Catalyzes the reversible phosphorolytic breakdown of the N-glycosidic bond in the beta-(deoxy)ribonucleoside molecules, with the formation of the corresponding free purine bases and pentose-1-phosphate. The polypeptide is Purine nucleoside phosphorylase DeoD-type (Streptococcus uberis (strain ATCC BAA-854 / 0140J)).